Consider the following 287-residue polypeptide: Glycine--tRNA ligase alpha subunit (287 aa).

Belongs to the class-II aminoacyl-tRNA synthetase family. Tetramer of two alpha and two beta subunits.

The protein localises to the cytoplasm. The catalysed reaction is tRNA(Gly) + glycine + ATP = glycyl-tRNA(Gly) + AMP + diphosphate. In Campylobacter jejuni subsp. doylei (strain ATCC BAA-1458 / RM4099 / 269.97), this protein is Glycine--tRNA ligase alpha subunit.